Here is a 585-residue protein sequence, read N- to C-terminus: 3-hydroxy-3-methylglutaryl-coenzyme A reductase 1 (585 aa).

Helical transmembrane passes span 38–58 (LYLT…FLLC) and 77–97 (EIVA…FFGI). Positions 98 to 169 (DFVQSLVLRP…DEMPVTVMTE (72 aa)) are linker. Residues 170 to 585 (EDEEIIRSVV…SSKDVSKVSS (416 aa)) form a catalytic region. Catalysis depends on Glu264, which acts as the Charge relay system. Asn328 carries an N-linked (GlcNAc...) asparagine glycan. The active-site Charge relay system is the Lys396. N-linked (GlcNAc...) asparagine glycosylation occurs at Asn441. Asp472 acts as the Charge relay system in catalysis. Catalysis depends on His570, which acts as the Proton donor. An N-linked (GlcNAc...) asparagine glycan is attached at Asn574.

Belongs to the HMG-CoA reductase family.

The protein resides in the endoplasmic reticulum membrane. It is found in the mitochondrion membrane. It localises to the plastid membrane. It carries out the reaction (R)-mevalonate + 2 NADP(+) + CoA = (3S)-3-hydroxy-3-methylglutaryl-CoA + 2 NADPH + 2 H(+). It functions in the pathway metabolic intermediate biosynthesis; (R)-mevalonate biosynthesis; (R)-mevalonate from acetyl-CoA: step 3/3. Its function is as follows. Catalyzes the synthesis of mevalonate. The specific precursor of all isoprenoid compounds present in plants. This chain is 3-hydroxy-3-methylglutaryl-coenzyme A reductase 1 (HMG1), found in Gossypium hirsutum (Upland cotton).